A 412-amino-acid chain; its full sequence is Proteasome-activating nucleotidase (412 aa).

Positions 15-72 form a coiled coil; sequence EDLYRYLLERVTNLEDRNTELREQLRQIEADKRYLETQKVRYEREVRKFKGEIEQMKS. Residues 197–202 and His-336 contribute to the ATP site; that span reads GTGKTL. Positions 410 to 412 are docks into pockets in the proteasome alpha-ring to cause gate opening; it reads MFA.

The protein belongs to the AAA ATPase family. Homohexamer. The hexameric complex has a two-ring architecture resembling a top hat that caps the 20S proteasome core at one or both ends. Upon ATP-binding, the C-terminus of PAN interacts with the alpha-rings of the proteasome core by binding to the intersubunit pockets.

It is found in the cytoplasm. Functionally, ATPase which is responsible for recognizing, binding, unfolding and translocation of substrate proteins into the archaeal 20S proteasome core particle. Is essential for opening the gate of the 20S proteasome via an interaction with its C-terminus, thereby allowing substrate entry and access to the site of proteolysis. Thus, the C-termini of the proteasomal ATPase function like a 'key in a lock' to induce gate opening and therefore regulate proteolysis. Unfolding activity requires energy from ATP hydrolysis, whereas ATP binding alone promotes ATPase-20S proteasome association which triggers gate opening, and supports translocation of unfolded substrates. In Methanosphaerula palustris (strain ATCC BAA-1556 / DSM 19958 / E1-9c), this protein is Proteasome-activating nucleotidase.